A 266-amino-acid chain; its full sequence is 3-methyl-2-oxobutanoate hydroxymethyltransferase (266 aa).

Asp-45 and Asp-84 together coordinate Mg(2+). Residues 45 to 46, Asp-84, and Lys-113 each bind 3-methyl-2-oxobutanoate; that span reads DS. Residue Glu-115 coordinates Mg(2+). Glu-183 acts as the Proton acceptor in catalysis.

It belongs to the PanB family. Homodecamer; pentamer of dimers. The cofactor is Mg(2+).

The protein localises to the cytoplasm. The catalysed reaction is 3-methyl-2-oxobutanoate + (6R)-5,10-methylene-5,6,7,8-tetrahydrofolate + H2O = 2-dehydropantoate + (6S)-5,6,7,8-tetrahydrofolate. It functions in the pathway cofactor biosynthesis; (R)-pantothenate biosynthesis; (R)-pantoate from 3-methyl-2-oxobutanoate: step 1/2. In terms of biological role, catalyzes the reversible reaction in which hydroxymethyl group from 5,10-methylenetetrahydrofolate is transferred onto alpha-ketoisovalerate to form ketopantoate. This Coxiella burnetii (strain CbuG_Q212) (Coxiella burnetii (strain Q212)) protein is 3-methyl-2-oxobutanoate hydroxymethyltransferase.